The following is a 410-amino-acid chain: Calsequestrin-2 (410 aa).

Positions 1–19 are cleaved as a signal peptide; sequence MKRTHLFIAGLYLLASCRA. The interval 221-242 is calcium regulated hydrophobic site; the sequence is MDEPIAIPDKPYTEEELVEFVK. At Y282 the chain carries Phosphotyrosine. N-linked (GlcNAc...) asparagine glycans are attached at residues N335 and N395. A disordered region spans residues 364–410; the sequence is DVLSGKINTEDDDNEEGDDGDDDEDDDDDDGNNSDEESNDDSDDDDE. Residues 373–410 are compositionally biased toward acidic residues; the sequence is EDDDNEEGDDGDDDEDDDDDDGNNSDEESNDDSDDDDE. Phosphoserine; by CK2 occurs at positions 397, 401, and 405.

Belongs to the calsequestrin family. As to quaternary structure, interacts with ASPH. Monomer, homodimer and homooligomer. Mostly monomeric in the absence of calcium. Forms higher oligomers in a calcium-dependent manner. Dimers associate to form tetramers, that then form linear homomer chains. Interacts with TRDN. Phosphorylation in the C-terminus, probably by CK2, moderately increases calcium buffering capacity. In terms of processing, N-glycosylated. As to expression, detected in heart muscle (at protein level).

Its subcellular location is the sarcoplasmic reticulum lumen. Calsequestrin is a high-capacity, moderate affinity, calcium-binding protein and thus acts as an internal calcium store in muscle. Calcium ions are bound by clusters of acidic residues at the protein surface, especially at the interface between subunits. Can bind around 60 Ca(2+) ions. Regulates the release of lumenal Ca(2+) via the calcium release channel RYR2; this plays an important role in triggering muscle contraction. Plays a role in excitation-contraction coupling in the heart and in regulating the rate of heart beats. The chain is Calsequestrin-2 (CASQ2) from Canis lupus familiaris (Dog).